Here is a 438-residue protein sequence, read N- to C-terminus: (3,5-dihydroxyphenyl)acetyl-CoA 1,2-dioxygenase (438 aa).

Substrate contacts are provided by residues aspartate 183, glutamate 189, 222–225 (HPRY), 233–238 (AGINLK), glycine 296, 325–327 (IPG), and glutamine 416.

It belongs to the enoyl-CoA hydratase/isomerase family. As to quaternary structure, homohexamer; dimer of trimers.

It catalyses the reaction (3,5-dihydroxyphenyl)acetyl-CoA + O2 = 2-(3,5-dihydroxyphenyl)-2-oxoacetate + CoA + H(+). Its activity is regulated as follows. Inhibited by DPA-S-(N-acetylcysteamine). Involved in the biosynthesis of the nonproteinogenic amino acid monomer (S)-3,5-dihydroxyphenylglycine (Dpg) responsible of the production of vancomycin and teicoplanin antibiotics. Catalyzes the unusual conversion 3,5-dihydroxyphenylacetyl-CoA (DPA-CoA) to 3,5-dihydroxyphenylglyoxylate. DpgC performed a net four-electron oxidation of the benzylic carbon of DPA-CoA and the hydrolysis of the thioester bond to generate free CoA. DpgC has the ability to process a diverse range of substituted phenylacetyl-CoA substrates. This Streptomyces toyocaensis protein is (3,5-dihydroxyphenyl)acetyl-CoA 1,2-dioxygenase.